The primary structure comprises 331 residues: MEDEAHEFFHTSDFAVDDLLVDFSNDDDEENDVVADSTTTTTITDSSNFSAADLPSFHGDVQDGTSFSGDLCIPSDDLADELEWLSNIVDESLSPEDVHKLELISGFKSRPDPKSDTGSPENPNSSSPIFTTDVSVPAKARSKRSRAAACNWASRGLLKETFYDSPFTGETILSSQQHLSPPTSPPLLMAPLGKKQAVDGGHRRKKDVSSPESGGAEERRCLHCATDKTPQWRTGPMGPKTLCNACGVRYKSGRLVPEYRPAASPTFVLAKHSNSHRKVMELRRQKEMSRAHHEFIHHHHGTDTAMIFDVSSDGDDYLIHHNVGPDFRQLI.

Disordered stretches follow at residues 30-49 (ENDVVADSTTTTTITDSSNF) and 105-138 (SGFKSRPDPKSDTGSPENPNSSSPIFTTDVSVPA). A compositionally biased stretch (low complexity) spans 34 to 47 (VADSTTTTTITDSS). The segment covering 116–134 (DTGSPENPNSSSPIFTTDV) has biased composition (polar residues). The short motif at 139 to 146 (KARSKRSR) is the Nuclear localization signal element. The tract at residues 174–218 (SSQQHLSPPTSPPLLMAPLGKKQAVDGGHRRKKDVSSPESGGAEE) is disordered. Residues 215-269 (GAEERRCLHCATDKTPQWRTGPMGPKTLCNACGVRYKSGRLVPEYRPAASPTFVL) form a GATA-type zinc finger.

The protein belongs to the type IV zinc-finger family. Class A subfamily. Expressed in the vascular cylinder of roots. Expressed in the differentiation zone of the root stele.

The protein localises to the nucleus. Its function is as follows. Transcriptional activator that specifically binds 5'-GATA-3' or 5'-GAT-3' motifs within gene promoters. May be involved in the regulation of some light-responsive genes. Transcription activator involved in xylem formation. Functions upstream of NAC030/VND7, a master switch of xylem vessel differentiation. The polypeptide is GATA transcription factor 12 (Arabidopsis thaliana (Mouse-ear cress)).